A 141-amino-acid polypeptide reads, in one-letter code: MPTISQLVTTSRQDKNYKSKSPALHYGFNSLKKEDSEYNSPQKRGVCTRVTTMTPKKPNSALRKYARVRLSNGTEVTAYIPGVGHSLQEHSVVLVRGGRVKDLPGVRYHIVRGALDATGVANRMQGRSKYGAKRPKAAKKK.

Positions 1–11 (MPTISQLVTTS) are enriched in polar residues. Positions 1–22 (MPTISQLVTTSRQDKNYKSKSP) are disordered. Position 102 is a 3-methylthioaspartic acid (Asp102).

It belongs to the universal ribosomal protein uS12 family. As to quaternary structure, part of the 30S ribosomal subunit. Contacts proteins S8 and S17. May interact with IF1 in the 30S initiation complex.

In terms of biological role, with S4 and S5 plays an important role in translational accuracy. Interacts with and stabilizes bases of the 16S rRNA that are involved in tRNA selection in the A site and with the mRNA backbone. Located at the interface of the 30S and 50S subunits, it traverses the body of the 30S subunit contacting proteins on the other side and probably holding the rRNA structure together. The combined cluster of proteins S8, S12 and S17 appears to hold together the shoulder and platform of the 30S subunit. This Acholeplasma laidlawii (strain PG-8A) protein is Small ribosomal subunit protein uS12.